The following is a 71-amino-acid chain: DNA-directed RNA polymerase subunit omega (71 aa).

This sequence belongs to the RNA polymerase subunit omega family. In terms of assembly, the RNAP catalytic core consists of 2 alpha, 1 beta, 1 beta' and 1 omega subunit. When a sigma factor is associated with the core the holoenzyme is formed, which can initiate transcription.

The catalysed reaction is RNA(n) + a ribonucleoside 5'-triphosphate = RNA(n+1) + diphosphate. Functionally, promotes RNA polymerase assembly. Latches the N- and C-terminal regions of the beta' subunit thereby facilitating its interaction with the beta and alpha subunits. This Levilactobacillus brevis (strain ATCC 367 / BCRC 12310 / CIP 105137 / JCM 1170 / LMG 11437 / NCIMB 947 / NCTC 947) (Lactobacillus brevis) protein is DNA-directed RNA polymerase subunit omega.